Consider the following 159-residue polypeptide: Ribosomal RNA large subunit methyltransferase H (159 aa).

S-adenosyl-L-methionine is bound by residues Gly-108 and 127 to 132; that span reads FSKMTF.

It belongs to the RNA methyltransferase RlmH family. As to quaternary structure, homodimer.

It localises to the cytoplasm. It catalyses the reaction pseudouridine(1915) in 23S rRNA + S-adenosyl-L-methionine = N(3)-methylpseudouridine(1915) in 23S rRNA + S-adenosyl-L-homocysteine + H(+). Functionally, specifically methylates the pseudouridine at position 1915 (m3Psi1915) in 23S rRNA. This Clostridium beijerinckii (strain ATCC 51743 / NCIMB 8052) (Clostridium acetobutylicum) protein is Ribosomal RNA large subunit methyltransferase H.